The following is a 169-amino-acid chain: Putative phosphoesterase SERP0604 (169 aa).

Catalysis depends on His34, which acts as the Proton donor. 2 consecutive short sequence motifs (HXTX) follow at residues 34–37 (HITI) and 115–118 (HFTI). His115 functions as the Proton acceptor in the catalytic mechanism.

Belongs to the 2H phosphoesterase superfamily. YjcG family.

The chain is Putative phosphoesterase SERP0604 from Staphylococcus epidermidis (strain ATCC 35984 / DSM 28319 / BCRC 17069 / CCUG 31568 / BM 3577 / RP62A).